The following is a 514-amino-acid chain: Glutathione-binding protein GsiB (514 aa).

An N-terminal signal peptide occupies residues 1–27; it reads MSVMTIQRRWLVAAGVTAAMVASPVWA.

This sequence belongs to the bacterial solute-binding protein 5 family. As to quaternary structure, the complex is composed of two ATP-binding proteins (GsiA), two transmembrane proteins (GsiC and GsiD) and a solute-binding protein (GsiB).

Its subcellular location is the periplasm. In terms of biological role, part of the ABC transporter complex GsiABCD involved in glutathione import. Binds glutathione. The polypeptide is Glutathione-binding protein GsiB (Pectobacterium atrosepticum (strain SCRI 1043 / ATCC BAA-672) (Erwinia carotovora subsp. atroseptica)).